The chain runs to 827 residues: 4-hydroxy-3-methylbut-2-enyl diphosphate reductase (827 aa).

Positions 1–284 (MEIIRAKHMG…MNIEKKVRGI (284 aa)) are 4-hydroxy-3-methylbut-2-enyl diphosphate reductase. [4Fe-4S] cluster is bound at residue Cys12. Residues His40 and His79 each contribute to the (2E)-4-hydroxy-3-methylbut-2-enyl diphosphate site. 2 residues coordinate dimethylallyl diphosphate: His40 and His79. The isopentenyl diphosphate site is built by His40 and His79. Cys101 is a binding site for [4Fe-4S] cluster. Position 129 (His129) interacts with (2E)-4-hydroxy-3-methylbut-2-enyl diphosphate. His129 provides a ligand contact to dimethylallyl diphosphate. His129 is a binding site for isopentenyl diphosphate. Glu131 serves as the catalytic Proton donor. Thr168 contributes to the (2E)-4-hydroxy-3-methylbut-2-enyl diphosphate binding site. Residue Cys196 coordinates [4Fe-4S] cluster. Residues Ser224, Ser225, Asn226, and Ser268 each contribute to the (2E)-4-hydroxy-3-methylbut-2-enyl diphosphate site. Residues Ser224, Ser225, Asn226, and Ser268 each coordinate dimethylallyl diphosphate. The isopentenyl diphosphate site is built by Ser224, Ser225, Asn226, and Ser268. 4 S1 motif domains span residues 477-545 (GQIV…LSIK), 562-632 (DDEI…LGIK), 649-716 (DTVI…GSLK), and 733-802 (GTTV…LSIK).

It in the N-terminal section; belongs to the IspH family. [4Fe-4S] cluster serves as cofactor.

It catalyses the reaction isopentenyl diphosphate + 2 oxidized [2Fe-2S]-[ferredoxin] + H2O = (2E)-4-hydroxy-3-methylbut-2-enyl diphosphate + 2 reduced [2Fe-2S]-[ferredoxin] + 2 H(+). The catalysed reaction is dimethylallyl diphosphate + 2 oxidized [2Fe-2S]-[ferredoxin] + H2O = (2E)-4-hydroxy-3-methylbut-2-enyl diphosphate + 2 reduced [2Fe-2S]-[ferredoxin] + 2 H(+). The protein operates within isoprenoid biosynthesis; dimethylallyl diphosphate biosynthesis; dimethylallyl diphosphate from (2E)-4-hydroxy-3-methylbutenyl diphosphate: step 1/1. It participates in isoprenoid biosynthesis; isopentenyl diphosphate biosynthesis via DXP pathway; isopentenyl diphosphate from 1-deoxy-D-xylulose 5-phosphate: step 6/6. Its function is as follows. Catalyzes the conversion of 1-hydroxy-2-methyl-2-(E)-butenyl 4-diphosphate (HMBPP) into a mixture of isopentenyl diphosphate (IPP) and dimethylallyl diphosphate (DMAPP). Acts in the terminal step of the DOXP/MEP pathway for isoprenoid precursor biosynthesis. This Fusobacterium nucleatum subsp. nucleatum (strain ATCC 25586 / DSM 15643 / BCRC 10681 / CIP 101130 / JCM 8532 / KCTC 2640 / LMG 13131 / VPI 4355) protein is 4-hydroxy-3-methylbut-2-enyl diphosphate reductase.